Consider the following 255-residue polypeptide: uncharacterized protein (255 aa).

Residues M1–G23 form the signal peptide. C24 is lipidated: N-palmitoyl cysteine. Residue C24 is the site of S-diacylglycerol cysteine attachment.

It belongs to the staphylococcal tandem lipoprotein family.

It localises to the cell membrane. This is an uncharacterized protein from Staphylococcus aureus (strain USA300).